An 8922-amino-acid chain; its full sequence is Protein clarinet (8922 aa).

Positions Ser11–Ser35 are disordered. The segment covering Val19–Gln28 has biased composition (acidic residues). Residues Lys385–Glu405 adopt a coiled-coil conformation. Disordered regions lie at residues Gln527–Leu579, Ile622–Leu673, Leu687–Glu860, Ser880–Leu955, Glu971–Leu1049, Ser1062–Arg1139, Ile1151–Leu1331, Glu1347–Ser1420, Ser1444–Thr1520, Ser1538–Asp1619, Ser1632–Glu1710, Ser1726–Leu1801, Ser1820–Glu1898, Val1939–Glu1992, Ile2032–Thr2084, Ile2126–Pro2175, Gln2194–Leu2213, Ile2220–Asp2246, Ser2329–Glu2403, Ser2423–Leu2497, Ser2516–Glu2594, Ser2610–Glu2684, Ser2704–Phe2845, Ser2892–Lys2963, Glu2983–Leu3155, Glu3171–Leu3249, Ser3268–Leu3337, Ser3619–Asp3639, Ala3995–Ile4079, Ile4117–Thr4169, Ser4181–Ile4271, Gln4557–Glu4624, Glu4636–Leu4656, Ser4666–Ser4685, Glu4730–Gln4801, Pro4855–Asp4899, Pro5004–Thr5036, Leu5360–Ser5379, Arg5390–Leu5413, Lys5484–Val5511, Pro5540–Gly5572, Ala6194–Ser6303, Asp6354–Met6437, Ser6487–Ile6510, Ala6577–Leu6609, Asn6668–Arg6691, Ala6728–Gly6768, Thr6998–Ser7018, Ala7045–Asp7098, Phe7137–Pro7175, Glu7202–Arg7263, Lys7313–Glu7350, Asp7598–Met7623, Thr7760–Thr7797, and His7842–Val7881. The span at Ser531–Asp552 shows a compositional bias: basic and acidic residues. Basic and acidic residues predominate over residues Met760–Ala776. Low complexity predominate over residues Ser1062–Pro1076. Residues Met1230–His1244 are compositionally biased toward basic and acidic residues. The span at Ile1251–Ser1261 shows a compositional bias: polar residues. Basic and acidic residues-rich tracts occupy residues Met1606–Asp1619 and Met1700–Glu1710. Composition is skewed to basic and acidic residues over residues Met1888–Glu1898 and Met1982–Glu1992. Residues Gln2194–Thr2204 are compositionally biased toward polar residues. The segment covering Met2584–Glu2594 has biased composition (basic and acidic residues). Residues Met2772–Ala2788 are compositionally biased toward basic and acidic residues. Over residues Leu2793–Ser2803 the composition is skewed to polar residues. The span at Ala3076 to Ser3085 shows a compositional bias: polar residues. Polar residues predominate over residues Gly4035–Thr4044. Over residues Pro4065–Ile4079 the composition is skewed to basic and acidic residues. 3 stretches are compositionally biased toward polar residues: residues Leu4182–Pro4195, Ser4223–Phe4234, and Met4255–Ile4271. Over residues Ile4571–Ser4580 the composition is skewed to basic and acidic residues. Residues Asn4581–Gln4594 are compositionally biased toward polar residues. The span at Met4613–Glu4624 shows a compositional bias: basic and acidic residues. A compositionally biased stretch (polar residues) spans Glu4636–Thr4645. Over residues Glu4730–Thr4739 the composition is skewed to polar residues. Residues Glu4871–Ser4890 are compositionally biased toward low complexity. A compositionally biased stretch (polar residues) spans Glu5009–Thr5023. Residues Arg5390 to Arg5407 are compositionally biased toward low complexity. The segment covering Gln5486 to Ser5499 has biased composition (polar residues). Over residues Pro5540 to Pro5550 the composition is skewed to pro residues. The segment covering Arg5560–Gly5572 has biased composition (low complexity). Composition is skewed to polar residues over residues Ala6225–Phe6245 and Lys6270–Arg6284. Basic and acidic residues-rich tracts occupy residues Lys6285–Ser6303 and Gly6376–Leu6422. Residues Leu6494–Ser6505 show a composition bias toward polar residues. Low complexity predominate over residues Ser6590–Ser6600. The span at Glu6670–Pro6687 shows a compositional bias: polar residues. The span at Ser6735–Ser6747 shows a compositional bias: low complexity. 2 stretches are compositionally biased toward basic and acidic residues: residues Thr6998–Thr7008 and Ala7045–Glu7069. Positions Ser7071 to Thr7086 are enriched in low complexity. Over residues Thr7155 to Pro7175 the composition is skewed to basic and acidic residues. Over residues Ser7248 to Tyr7260 the composition is skewed to acidic residues. The segment covering Lys7313 to Pro7331 has biased composition (low complexity). Residues Ser7599–Asn7609 show a composition bias toward basic and acidic residues. Low complexity-rich tracts occupy residues Ser7777–Ser7788 and Ala7854–Ser7880. A coiled-coil region spans residues Lys7895 to Glu7915. Residues Ser8510–Glu8562 are disordered. Composition is skewed to polar residues over residues Thr8517 to Arg8530 and Ser8541 to Met8551. Residues Pro8552–Glu8562 are compositionally biased toward basic and acidic residues. Residues Arg8570–Lys8661 enclose the PDZ domain. The C2 domain occupies Cys8714 to Tyr8835.

As to expression, expressed in the nervous system.

The protein resides in the synapse. It is found in the cell projection. Its subcellular location is the axon. In terms of biological role, required for synapse development in the active zone of presynaptic terminals of specific neurons including serotonergic NSM neurons. The active zone is a protein-dense neuronal region within the presynaptic bouton, from which synaptic vesicles send neurotransmitter signals across the synapse. Plays a role in the recruitment and clustering of synaptic vesicles in the active zone of presynaptic terminals in serotonergic NSM neurons, and coordinates the release of synaptic vesicles at presynaptic terminals to regulate neurotransmission at neuromuscular junctions. Regulates synapse number in inhibitory motor neurons and plays a role in spontaneous postsynaptic synaptic vesicle release in muscle cells. In Caenorhabditis elegans, this protein is Protein clarinet.